The primary structure comprises 215 residues: Ras-related protein RAB1BV (215 aa).

Residues 22-29 (GDSGVGKS), 70-74 (DTAGQ), and 128-131 (NKAD) contribute to the GTP site. The interval 183–215 (DSDTRQEAQPSITIKPADQSGNQAAAKSACCGS) is disordered. S-geranylgeranyl cysteine attachment occurs at residues Cys212 and Cys213.

The protein belongs to the small GTPase superfamily. Rab family.

It localises to the cell membrane. The chain is Ras-related protein RAB1BV (RAB1BV) from Beta vulgaris (Sugar beet).